A 371-amino-acid chain; its full sequence is tRNA/tmRNA (uracil-C(5))-methyltransferase (371 aa).

S-adenosyl-L-methionine is bound by residues Gln194, Tyr223, Asn228, Glu244, and Asp304. Residue Cys329 is the Nucleophile of the active site. Glu363 serves as the catalytic Proton acceptor.

Belongs to the class I-like SAM-binding methyltransferase superfamily. RNA M5U methyltransferase family. TrmA subfamily.

The catalysed reaction is uridine(54) in tRNA + S-adenosyl-L-methionine = 5-methyluridine(54) in tRNA + S-adenosyl-L-homocysteine + H(+). It catalyses the reaction uridine(341) in tmRNA + S-adenosyl-L-methionine = 5-methyluridine(341) in tmRNA + S-adenosyl-L-homocysteine + H(+). Its function is as follows. Dual-specificity methyltransferase that catalyzes the formation of 5-methyluridine at position 54 (m5U54) in all tRNAs, and that of position 341 (m5U341) in tmRNA (transfer-mRNA). The protein is tRNA/tmRNA (uracil-C(5))-methyltransferase of Sulfurovum sp. (strain NBC37-1).